A 795-amino-acid chain; its full sequence is Lon protease (795 aa).

The Lon N-terminal domain maps to 7 to 213; sequence PQILVVRNQV…KIIGSGIEDL (207 aa). Residue 379-386 participates in ATP binding; the sequence is GPPGVGKS. The region spanning 615-795 is the Lon proteolytic domain; it reads DALPGIVNGM…YKDIYNKIFN (181 aa). Residues S702 and K745 contribute to the active site.

It belongs to the peptidase S16 family. Homohexamer. Organized in a ring with a central cavity.

It localises to the cytoplasm. It carries out the reaction Hydrolysis of proteins in presence of ATP.. In terms of biological role, ATP-dependent serine protease that mediates the selective degradation of mutant and abnormal proteins as well as certain short-lived regulatory proteins. Required for cellular homeostasis and for survival from DNA damage and developmental changes induced by stress. Degrades polypeptides processively to yield small peptide fragments that are 5 to 10 amino acids long. Binds to DNA in a double-stranded, site-specific manner. The sequence is that of Lon protease from Mycoplasma pneumoniae (strain ATCC 29342 / M129 / Subtype 1) (Mycoplasmoides pneumoniae).